The primary structure comprises 137 residues: Profilin-3 (137 aa).

This sequence belongs to the profilin family. As to quaternary structure, interacts with ACTRT3.

The protein localises to the cytoplasm. It is found in the cytoskeleton. The protein resides in the nucleus. Binds to actin and affects the structure of the cytoskeleton. Binds to poly-L-proline, phosphatidylinositol 3-phosphate (PtdIns(3)P), phosphatidylinositol 4,5-bisphosphate (PtdIns(4,5)P2) and phosphatidylinositol 4-phosphate (PtdIns(4)P). Slightly reduces actin polymerization. May be involved in spermatogenesis. This chain is Profilin-3 (PFN3), found in Bos taurus (Bovine).